A 410-amino-acid chain; its full sequence is MGSCSPQLPLICLSDQTLKPGSSKWVKVRSDVRKALEDYGCFEAKIDQVSMELQGSVLKAMQELFALPTEAKQRNVCPKPFAGYFSHNGLSESFGIKDANILEKAHEFTQQLWPEGNKSIKMIQLYAEKLAELDMMVRRLILESYGIEYFIDEHLNSTYYRMRLMKYIARPDNDITAAVGANVDNGANDNADGDANVNDDGASIGVKVNVDVGDDVNDNDSVNIGVGVDINVETNVNGHLDAEANGDATAWVVGAVSGNASVGAKEANVDAELGLPSHTDKSLSGIIYQHQIDGLEVKTKEGKWIRVKPAPNTVIFIAGDALCALMNGRIPSPYHRVRVTEKKKTRYAAALFSNPKEGYIIDSPKELVDEKHPRAFKPFDFVDLFNFYHTEAGRRAPSTLQAFCGVSAGK.

Positions 258 to 355 (GNASVGAKEA…RYAAALFSNP (98 aa)) constitute a Fe2OG dioxygenase domain. Residues His-278, Asp-280, and His-335 each contribute to the Fe cation site. A 2-oxoglutarate-binding site is contributed by Arg-346.

Belongs to the iron/ascorbate-dependent oxidoreductase family. Fe(2+) serves as cofactor.

2-oxoglutarate-dependent dioxygenase involved in glucosinolates biosynthesis. Catalyzes the conversion of methylsulfinylalkyl glucosinolates to hydroxyalkyl glucosinolates. The sequence is that of 2-oxoglutarate-dependent dioxygenase AOP3 (AOP3) from Arabidopsis thaliana (Mouse-ear cress).